The sequence spans 480 residues: Cytochrome b-c1 complex subunit 1, mitochondrial (480 aa).

Residues 1-34 (MAASAVCRAACSGTQVLLRTRRSPALLRLPALRG) constitute a mitochondrion transit peptide. N6-acetyllysine occurs at positions 111 and 138. The residue at position 163 (K163) is an N6-acetyllysine; alternate. K163 is subject to N6-succinyllysine; alternate. S212 is modified (phosphoserine). Residue T214 is modified to Phosphothreonine. At K248 the chain carries N6-acetyllysine.

This sequence belongs to the peptidase M16 family. UQCRC1/QCR1 subfamily. Component of the ubiquinol-cytochrome c oxidoreductase (cytochrome b-c1 complex, complex III, CIII), a multisubunit enzyme composed of 11 subunits. The complex is composed of 3 respiratory subunits cytochrome b, cytochrome c1 and Rieske protein UQCRFS1, 2 core protein subunits UQCRC1/QCR1 and UQCRC2/QCR2, and 6 low-molecular weight protein subunits UQCRH/QCR6, UQCRB/QCR7, UQCRQ/QCR8, UQCR10/QCR9, UQCR11/QCR10 and subunit 9, the cleavage product of Rieske protein UQCRFS1. The complex exists as an obligatory dimer and forms supercomplexes (SCs) in the inner mitochondrial membrane with NADH-ubiquinone oxidoreductase (complex I, CI) and cytochrome c oxidase (complex IV, CIV), resulting in different assemblies (supercomplex SCI(1)III(2)IV(1) and megacomplex MCI(2)III(2)IV(2)). Interacts with UQCC6. Interacts with STMP1. Acetylation of Lys-138 is observed in liver mitochondria from fasted mice but not from fed mice. As to expression, expressed in neurons and astrocytes of the cerebral cortex and hippocampus (at protein level).

It is found in the mitochondrion inner membrane. In terms of biological role, component of the ubiquinol-cytochrome c oxidoreductase, a multisubunit transmembrane complex that is part of the mitochondrial electron transport chain which drives oxidative phosphorylation. The respiratory chain contains 3 multisubunit complexes succinate dehydrogenase (complex II, CII), ubiquinol-cytochrome c oxidoreductase (cytochrome b-c1 complex, complex III, CIII) and cytochrome c oxidase (complex IV, CIV), that cooperate to transfer electrons derived from NADH and succinate to molecular oxygen, creating an electrochemical gradient over the inner membrane that drives transmembrane transport and the ATP synthase. The cytochrome b-c1 complex catalyzes electron transfer from ubiquinol to cytochrome c, linking this redox reaction to translocation of protons across the mitochondrial inner membrane, with protons being carried across the membrane as hydrogens on the quinol. In the process called Q cycle, 2 protons are consumed from the matrix, 4 protons are released into the intermembrane space and 2 electrons are passed to cytochrome c. The 2 core subunits UQCRC1/QCR1 and UQCRC2/QCR2 are homologous to the 2 mitochondrial-processing peptidase (MPP) subunits beta-MPP and alpha-MPP respectively, and they seem to have preserved their MPP processing properties. May be involved in the in situ processing of UQCRFS1 into the mature Rieske protein and its mitochondrial targeting sequence (MTS)/subunit 9 when incorporated into complex III. Seems to play an important role in the maintenance of proper mitochondrial function in nigral dopaminergic neurons. The sequence is that of Cytochrome b-c1 complex subunit 1, mitochondrial (Uqcrc1) from Mus musculus (Mouse).